We begin with the raw amino-acid sequence, 285 residues long: Homeobox protein Hox-A4 (285 aa).

Disordered stretches follow at residues 19–70 (PFEE…APRA) and 94–130 (ASPG…TTPA). Residues 27–41 (GGPGGGDGAVGGGPG) are compositionally biased toward gly residues. Positions 44 to 70 (RPQSAPHLPAPNPHAARQPPAYYAPRA) are enriched in low complexity. The span at 106-118 (GAHPSPAPQPPVP) shows a compositional bias: pro residues. The Antp-type hexapeptide signature appears at 159-164 (VYPWMK). Residues 180 to 239 (PKRSRTAYTRQQVLELEKEFHFNRYLTRRRRIEIAHTLCLSERQVKIWFQNRRMKWKKDH) constitute a DNA-binding region (homeobox). The interval 238–285 (DHKLPNTKMRSSNTASAPAGPPGKAQTHSPHHHPHPLPGASTPIPSSI) is disordered.

The protein belongs to the Antp homeobox family. Deformed subfamily.

The protein localises to the nucleus. Its function is as follows. Sequence-specific transcription factor which is part of a developmental regulatory system that provides cells with specific positional identities on the anterior-posterior axis. Binds to sites in the 5'-flanking sequence of its coding region with various affinities. The consensus sequences of the high and low affinity binding sites are 5'-TAATGA[CG]-3' and 5'-CTAATTTT-3'. The chain is Homeobox protein Hox-A4 (Hoxa4) from Mus musculus (Mouse).